Reading from the N-terminus, the 183-residue chain is COMM domain-containing protein 8 (183 aa).

The COMM domain maps to 116–183 (QLQDFDWQVK…AANKVVLQLK (68 aa)).

It belongs to the COMM domain-containing protein 8 family. In terms of assembly, component of the commander complex consisting of the CCC subcomplex and the retriever subcomplex. Component of the CCC (COMMD/CCDC22/CCDC93) subcomplex consisting of COMMD1, COMMD2, COMMD3, COMMD4, COMMD5, COMMD6, COMMD7, COMMD8, COMMD9, COMMD10, CCDC22 and CCDC93; within the complex forms a heterodimer with COMMD4. Interacts with RELA, RELB, NFKB1/p105. Interacts with CCDC22, CCDC93, SCNN1B, CUL1, CUL2, CUL3, CUL4A, CUL4B, CUL5. Widely expressed with highest expression in thyroid.

Its subcellular location is the cytoplasm. It is found in the nucleus. In terms of biological role, scaffold protein in the commander complex that is essential for endosomal recycling of transmembrane cargos; the commander complex is composed of the CCC subcomplex and the retriever subcomplex. May modulate activity of cullin-RING E3 ubiquitin ligase (CRL) complexes. May down-regulate activation of NF-kappa-B. This chain is COMM domain-containing protein 8 (COMMD8), found in Homo sapiens (Human).